The sequence spans 160 residues: Cytochrome b6-f complex subunit 4 (160 aa).

3 helical membrane-spanning segments follow: residues 36-56 (LLYIFPVVILGTIACTIGLAV), 95-115 (LLGVLLMASVPVGLLTVPFLE), and 131-151 (TVFLIGTAVAIWLGIGAALPI).

Belongs to the cytochrome b family. PetD subfamily. The 4 large subunits of the cytochrome b6-f complex are cytochrome b6, subunit IV (17 kDa polypeptide, petD), cytochrome f and the Rieske protein, while the 4 small subunits are petG, petL, petM and petN. The complex functions as a dimer.

The protein localises to the plastid. The protein resides in the chloroplast thylakoid membrane. In terms of biological role, component of the cytochrome b6-f complex, which mediates electron transfer between photosystem II (PSII) and photosystem I (PSI), cyclic electron flow around PSI, and state transitions. The sequence is that of Cytochrome b6-f complex subunit 4 from Chara vulgaris (Common stonewort).